Consider the following 302-residue polypeptide: 33 kDa chaperonin (302 aa).

2 cysteine pairs are disulfide-bonded: Cys234-Cys236 and Cys267-Cys270.

Belongs to the HSP33 family. Under oxidizing conditions two disulfide bonds are formed involving the reactive cysteines. Under reducing conditions zinc is bound to the reactive cysteines and the protein is inactive.

It is found in the cytoplasm. Its function is as follows. Redox regulated molecular chaperone. Protects both thermally unfolding and oxidatively damaged proteins from irreversible aggregation. Plays an important role in the bacterial defense system toward oxidative stress. The sequence is that of 33 kDa chaperonin from Neisseria meningitidis serogroup B (strain ATCC BAA-335 / MC58).